The sequence spans 51 residues: Large ribosomal subunit protein eL39 (51 aa).

Belongs to the eukaryotic ribosomal protein eL39 family.

The chain is Large ribosomal subunit protein eL39 from Methanococcus aeolicus (strain ATCC BAA-1280 / DSM 17508 / OCM 812 / Nankai-3).